Here is an 89-residue protein sequence, read N- to C-terminus: Large ribosomal subunit protein uL23cz/uL23cy (89 aa).

The protein belongs to the universal ribosomal protein uL23 family. In terms of assembly, part of the 50S ribosomal subunit.

It localises to the plastid. The protein resides in the chloroplast. In terms of biological role, binds to 23S rRNA. This Calycanthus floridus var. glaucus (Eastern sweetshrub) protein is Large ribosomal subunit protein uL23cz/uL23cy (rpl23-A).